Reading from the N-terminus, the 305-residue chain is Coenzyme PQQ synthesis protein B (305 aa).

The protein belongs to the PqqB family.

It functions in the pathway cofactor biosynthesis; pyrroloquinoline quinone biosynthesis. Its function is as follows. May be involved in the transport of PQQ or its precursor to the periplasm. This chain is Coenzyme PQQ synthesis protein B, found in Methylobacillus flagellatus (strain ATCC 51484 / DSM 6875 / VKM B-1610 / KT).